Reading from the N-terminus, the 180-residue chain is Beta-lactoglobulin-1 (180 aa).

The signal sequence occupies residues 1–18 (MKCLLLALGLALMCGIQA). 2 disulfide bridges follow: cysteine 84/cysteine 178 and cysteine 124/cysteine 137.

Belongs to the calycin superfamily. Lipocalin family. As to quaternary structure, monomer.

It is found in the secreted. Lactoglobulin is the primary component of whey, it binds retinol and is probably involved in the transport of that molecule. This is Beta-lactoglobulin-1 (LGB1) from Equus caballus (Horse).